A 311-amino-acid polypeptide reads, in one-letter code: Heme A synthase (311 aa).

The Cytoplasmic portion of the chain corresponds to 1-6 (MQRFIK). A helical membrane pass occupies residues 7 to 27 (WLAVITSLDLLIVLLGGALVT). At 28-62 (KTGSGQGCGKSWPLCNGEFVPSNLSMETIIELSHR) the chain is on the extracellular side. Cys35 and Cys42 are disulfide-bonded. Residue Glu58 is part of the active site. His61 is a heme o binding site. A helical membrane pass occupies residues 63–83 (LTSGSAGILVTLLCILSWKYY). The Cytoplasmic segment spans residues 84 to 91 (KHVRETKT). A helical membrane pass occupies residues 92-112 (LAILSFVFLVAQALMGAAAVV). The Extracellular segment spans residues 113–121 (WGQMPAVLA). A helical membrane pass occupies residues 122–142 (IHFGISLISFASVILLTCLIF). His123 serves as a coordination point for heme o. Over 143 to 159 (EIDQKFDARSLIMDKKM) the chain is Cytoplasmic. The helical transmembrane segment at 160–180 (KFHIYGVTIYSYIVVYTGALV) threads the bilayer. Topologically, residues 181–211 (RHERASLACPDFPLCSKNRPMPTQLHEWVQM) are extracellular. Residues Cys189 and Cys195 are joined by a disulfide bond. The chain crosses the membrane as a helical span at residues 212 to 232 (GHRVAAMLIFAWILYAMILAI). Position 213 (His213) interacts with heme b. The Cytoplasmic segment spans residues 233-243 (RHYKQQPVVYW). Residues 244–264 (GWIISFILVTLQAIVGILVVF) traverse the membrane as a helical segment. Over 265–271 (TNASLSM) the chain is Extracellular. Residues 272 to 292 (ALLHSLFISCLFAVLCYLVML) traverse the membrane as a helical segment. His275 serves as a coordination point for heme b. The Cytoplasmic segment spans residues 293 to 311 (GTRSKVNAKEAASTSKQTK).

The protein belongs to the COX15/CtaA family. Type 1 subfamily. Interacts with CtaB. It depends on heme b as a cofactor.

It localises to the cell membrane. It catalyses the reaction Fe(II)-heme o + 2 A + H2O = Fe(II)-heme a + 2 AH2. It participates in porphyrin-containing compound metabolism; heme A biosynthesis; heme A from heme O: step 1/1. Functionally, catalyzes the conversion of heme O to heme A by two successive hydroxylations of the methyl group at C8. The first hydroxylation forms heme I, the second hydroxylation results in an unstable dihydroxymethyl group, which spontaneously dehydrates, resulting in the formyl group of heme A. This chain is Heme A synthase, found in Bacillus cereus (strain ATCC 10987 / NRS 248).